The following is a 172-amino-acid chain: Gamma-crystallin-4 (172 aa).

Beta/gamma crystallin 'Greek key' domains lie at 1–37 and 38–80; these read IFFY…RVES and GNWI…RFIP. The segment at 81-85 is connecting peptide; it reads HPHSQ. Beta/gamma crystallin 'Greek key' domains lie at 86–126 and 127–169; these read YKMR…NVSD and GHWM…RRVH.

This sequence belongs to the beta/gamma-crystallin family. In terms of assembly, monomer.

In terms of biological role, crystallins are the dominant structural components of the vertebrate eye lens. The sequence is that of Gamma-crystallin-4 (cryg4) from Xenopus laevis (African clawed frog).